We begin with the raw amino-acid sequence, 445 residues long: Phosphoglucosamine mutase (445 aa).

Serine 99 (phosphoserine intermediate) is an active-site residue. Serine 99, aspartate 242, aspartate 244, and aspartate 246 together coordinate Mg(2+). Phosphoserine is present on serine 99.

The protein belongs to the phosphohexose mutase family. The cofactor is Mg(2+). Post-translationally, activated by phosphorylation.

The enzyme catalyses alpha-D-glucosamine 1-phosphate = D-glucosamine 6-phosphate. Functionally, catalyzes the conversion of glucosamine-6-phosphate to glucosamine-1-phosphate. The polypeptide is Phosphoglucosamine mutase (Helicobacter pylori (strain P12)).